Reading from the N-terminus, the 85-residue chain is Transcriptional repressor protein KorC (85 aa).

The segment at residues 28 to 47 (EVLRLAGLTGGKAAKVLGLG) is a DNA-binding region (H-T-H motif).

In terms of biological role, acts with KorA as corepressor in the control of the kilC and kilE operons. The polypeptide is Transcriptional repressor protein KorC (korC) (Escherichia coli).